The sequence spans 134 residues: GSH-induced LITAF domain protein (134 aa).

In terms of domain architecture, LITAF spans 33-113 (DPLGAPIQQT…CGNKVADFEK (81 aa)). Zn(2+) contacts are provided by Cys-53 and Cys-56. The tract at residues 68–88 (PGVAAVVACMMPFMLGFCFLC) is membrane-binding amphipathic helix. The Zn(2+) site is built by Cys-101 and Cys-104.

This sequence belongs to the CDIP1/LITAF family. In terms of assembly, interacts (via N- and C-terminal) with MIEL1 and LSD1 (via N-terminus).

It is found in the cell membrane. Acts as a membrane anchor, bringing other regulators of programmed cell death (PCD) to the plasma membrane. Negatively regulates hypersensitive cell death. This is GSH-induced LITAF domain protein from Arabidopsis thaliana (Mouse-ear cress).